Reading from the N-terminus, the 111-residue chain is Microtubule nucleation factor SSNA1 (111 aa).

Residues 6–71 (QALQNHNNEL…ARKTETKNEY (66 aa)) are a coiled coil.

It belongs to the SSNA1 family. Self-assembles into fibrils in a head-to-tail fashion.

The protein resides in the cytoplasm. Its subcellular location is the cytoskeleton. The protein localises to the flagellum basal body. It is found in the flagellum axoneme. Functionally, microtubule-binding protein which stabilizes dynamic microtubules by slowing growth and shrinkage at both plus and minus ends and serves as a sensor of microtubule damage. Induces microtubule branching which is mediated by the formation of long SSNA1 fibrils which guide microtubule protofilaments to split apart from the mother microtubule and form daughter microtubules. Required for cell division. This chain is Microtubule nucleation factor SSNA1, found in Chlamydomonas reinhardtii (Chlamydomonas smithii).